Here is a 121-residue protein sequence, read N- to C-terminus: Large ribosomal subunit protein bL12 (121 aa).

It belongs to the bacterial ribosomal protein bL12 family. In terms of assembly, homodimer. Part of the ribosomal stalk of the 50S ribosomal subunit. Forms a multimeric L10(L12)X complex, where L10 forms an elongated spine to which 2 to 4 L12 dimers bind in a sequential fashion. Binds GTP-bound translation factors.

In terms of biological role, forms part of the ribosomal stalk which helps the ribosome interact with GTP-bound translation factors. Is thus essential for accurate translation. The sequence is that of Large ribosomal subunit protein bL12 from Pediococcus pentosaceus (strain ATCC 25745 / CCUG 21536 / LMG 10740 / 183-1w).